Consider the following 216-residue polypeptide: uncharacterized protein (216 aa).

The HTH cro/C1-type domain maps to 8–63; that stretch reads LKTLMTSVHINASELARRTGIAQPIIHRLSTGQNTNPKLATIKPIARYFMVNISQL. The H-T-H motif DNA-binding region spans 19–38; the sequence is ASELARRTGIAQPIIHRLST.

This is an uncharacterized protein from Coxiella burnetii (strain RSA 493 / Nine Mile phase I).